Reading from the N-terminus, the 103-residue chain is c-Myc-binding protein (103 aa).

This sequence belongs to the AMY1 family. In terms of assembly, binds via its C-terminal region to the N-terminal region of MYC. Associates with AKAP1/S-AKAP84. Interacts with MYCBPAP. Interacts with CFAP91. In terms of tissue distribution, highly expressed in heart, placenta, pancreas, skeletal muscle and kidney. Also present at low levels in lung.

It localises to the cytoplasm. The protein localises to the nucleus. Its subcellular location is the mitochondrion. Its function is as follows. May control the transcriptional activity of MYC. Stimulates the activation of E box-dependent transcription by MYC. The chain is c-Myc-binding protein from Homo sapiens (Human).